The chain runs to 360 residues: Phenylalanine--tRNA ligase alpha subunit (360 aa).

Glutamate 260 lines the Mg(2+) pocket.

It belongs to the class-II aminoacyl-tRNA synthetase family. Phe-tRNA synthetase alpha subunit type 1 subfamily. As to quaternary structure, tetramer of two alpha and two beta subunits. Requires Mg(2+) as cofactor.

It localises to the cytoplasm. It carries out the reaction tRNA(Phe) + L-phenylalanine + ATP = L-phenylalanyl-tRNA(Phe) + AMP + diphosphate + H(+). The protein is Phenylalanine--tRNA ligase alpha subunit of Cereibacter sphaeroides (strain ATCC 17029 / ATH 2.4.9) (Rhodobacter sphaeroides).